The following is a 486-amino-acid chain: Ribulose bisphosphate carboxylase large chain (486 aa).

Substrate contacts are provided by asparagine 125 and threonine 175. Lysine 177 acts as the Proton acceptor in catalysis. Substrate is bound at residue lysine 179. Mg(2+) contacts are provided by lysine 203, aspartate 205, and glutamate 206. Position 203 is an N6-carboxylysine (lysine 203). The active-site Proton acceptor is histidine 295. Substrate is bound by residues arginine 296, histidine 328, and serine 380.

The protein belongs to the RuBisCO large chain family. Type I subfamily. Heterohexadecamer of 8 large chains and 8 small chains. Mg(2+) is required as a cofactor.

The catalysed reaction is 2 (2R)-3-phosphoglycerate + 2 H(+) = D-ribulose 1,5-bisphosphate + CO2 + H2O. It catalyses the reaction D-ribulose 1,5-bisphosphate + O2 = 2-phosphoglycolate + (2R)-3-phosphoglycerate + 2 H(+). Its function is as follows. RuBisCO catalyzes two reactions: the carboxylation of D-ribulose 1,5-bisphosphate, the primary event in carbon dioxide fixation, as well as the oxidative fragmentation of the pentose substrate. Both reactions occur simultaneously and in competition at the same active site. The sequence is that of Ribulose bisphosphate carboxylase large chain from Bradyrhizobium diazoefficiens (strain JCM 10833 / BCRC 13528 / IAM 13628 / NBRC 14792 / USDA 110).